Here is a 209-residue protein sequence, read N- to C-terminus: Imidazoleglycerol-phosphate dehydratase (209 aa).

It belongs to the imidazoleglycerol-phosphate dehydratase family.

It is found in the cytoplasm. The enzyme catalyses D-erythro-1-(imidazol-4-yl)glycerol 3-phosphate = 3-(imidazol-4-yl)-2-oxopropyl phosphate + H2O. It participates in amino-acid biosynthesis; L-histidine biosynthesis; L-histidine from 5-phospho-alpha-D-ribose 1-diphosphate: step 6/9. This chain is Imidazoleglycerol-phosphate dehydratase, found in Nostoc sp. (strain PCC 7120 / SAG 25.82 / UTEX 2576).